A 443-amino-acid polypeptide reads, in one-letter code: Tubulin beta chain (443 aa).

Gln11, Glu69, Ser138, Gly142, Thr143, Gly144, Asn204, and Asn226 together coordinate GTP. Mg(2+) is bound at residue Glu69. A disordered region spans residues 424-443 (QYQDATAEEEGEFEEEEGEN). A compositionally biased stretch (acidic residues) spans 429-443 (TAEEEGEFEEEEGEN).

The protein belongs to the tubulin family. As to quaternary structure, dimer of alpha and beta chains. A typical microtubule is a hollow water-filled tube with an outer diameter of 25 nm and an inner diameter of 15 nM. Alpha-beta heterodimers associate head-to-tail to form protofilaments running lengthwise along the microtubule wall with the beta-tubulin subunit facing the microtubule plus end conferring a structural polarity. Microtubules usually have 13 protofilaments but different protofilament numbers can be found in some organisms and specialized cells. Mg(2+) is required as a cofactor. Post-translationally, some glutamate residues at the C-terminus are either polyglutamylated or polyglycylated. These 2 modifications occur exclusively on glutamate residues and result in either polyglutamate or polyglycine chains on the gamma-carboxyl group. Both modifications can coexist on the same protein on adjacent residues, and lowering polyglycylation levels increases polyglutamylation, and reciprocally. The precise function of such modifications is still unclear but they regulate the assembly and dynamics of axonemal microtubules.

The protein localises to the cytoplasm. Its subcellular location is the cytoskeleton. Functionally, tubulin is the major constituent of microtubules, a cylinder consisting of laterally associated linear protofilaments composed of alpha- and beta-tubulin heterodimers. Microtubules grow by the addition of GTP-tubulin dimers to the microtubule end, where a stabilizing cap forms. Below the cap, tubulin dimers are in GDP-bound state, owing to GTPase activity of alpha-tubulin. The sequence is that of Tubulin beta chain (BTU1) from Tetrahymena thermophila.